The following is a 212-amino-acid chain: Ribosomal RNA small subunit methyltransferase G (212 aa).

S-adenosyl-L-methionine is bound by residues Gly73, Phe78, 96–98, 124–125, and Arg141; these read ESS and VE.

Belongs to the methyltransferase superfamily. RNA methyltransferase RsmG family.

The protein localises to the cytoplasm. In terms of biological role, specifically methylates the N7 position of a guanine in 16S rRNA. The chain is Ribosomal RNA small subunit methyltransferase G from Aster yellows witches'-broom phytoplasma (strain AYWB).